A 609-amino-acid chain; its full sequence is Replication protein E1 (609 aa).

Positions 81-83 match the Nuclear localization signal motif; it reads KRK. A phosphoserine; by host mark is found at Ser87 and Ser94. Residues 93-102 carry the Nuclear export signal motif; it reads LSPRLQSITI. The interval 149–312 is DNA-binding region; the sequence is QGVKGLGIVK…TMINHQTAQA (164 aa). In terms of domain architecture, SF3 helicase spans 411–561; the sequence is INFIRFLDIF…FPFDNNNMPQ (151 aa). Residue 437–444 participates in ATP binding; the sequence is GPPDTGKS. A Glycyl lysine isopeptide (Lys-Gly) (interchain with G-Cter in SUMO) cross-link involves residue Lys518. The segment at 584 to 609 is disordered; the sequence is DQEEEGDDGQSQRTFQCTAREPNGHL.

Belongs to the papillomaviridae E1 protein family. As to quaternary structure, can form hexamers. Interacts with E2 protein; this interaction increases E1 DNA binding specificity. Interacts with host DNA polymerase subunit POLA2. Interacts with host single stranded DNA-binding protein RPA1. Interacts with host TOP1; this interaction stimulates the enzymatic activity of TOP1. Post-translationally, phosphorylated. In terms of processing, sumoylated.

Its subcellular location is the host nucleus. It catalyses the reaction Couples ATP hydrolysis with the unwinding of duplex DNA by translocating in the 3'-5' direction.. The catalysed reaction is ATP + H2O = ADP + phosphate + H(+). Its function is as follows. ATP-dependent DNA 3'-5' helicase required for initiation of viral DNA replication. It forms a complex with the viral E2 protein. The E1-E2 complex binds to the replication origin which contains binding sites for both proteins. During the initial step, a dimer of E1 interacts with a dimer of protein E2 leading to a complex that binds the viral origin of replication with high specificity. Then, a second dimer of E1 displaces the E2 dimer in an ATP-dependent manner to form the E1 tetramer. Following this, two E1 monomers are added to each half of the site, which results in the formation of two E1 trimers on the viral ori. Subsequently, two hexamers will be created. The double hexamer acts as a bi-directional helicase machinery and unwinds the viral DNA and then recruits the host DNA polymerase to start replication. This Homo sapiens (Human) protein is Replication protein E1.